Consider the following 645-residue polypeptide: Threonine--tRNA ligase (645 aa).

Residues 1–63 form the TGS domain; that stretch reads MEQINIQFPD…ETDGSIEIVT (63 aa). The tract at residues 242 to 540 is catalytic; the sequence is DHRKIGKELE…LTEETKGAFP (299 aa). 3 residues coordinate Zn(2+): Cys336, His387, and His517.

This sequence belongs to the class-II aminoacyl-tRNA synthetase family. As to quaternary structure, homodimer. Requires Zn(2+) as cofactor.

It localises to the cytoplasm. It catalyses the reaction tRNA(Thr) + L-threonine + ATP = L-threonyl-tRNA(Thr) + AMP + diphosphate + H(+). Its function is as follows. Catalyzes the attachment of threonine to tRNA(Thr) in a two-step reaction: L-threonine is first activated by ATP to form Thr-AMP and then transferred to the acceptor end of tRNA(Thr). Also edits incorrectly charged L-seryl-tRNA(Thr). The protein is Threonine--tRNA ligase of Staphylococcus aureus (strain bovine RF122 / ET3-1).